The following is a 471-amino-acid chain: Proton-coupled amino acid transporter-like protein pathetic (471 aa).

N61 carries an N-linked (GlcNAc...) asparagine glycan. Transmembrane regions (helical) follow at residues F81–I101, I153–A173, A187–V207, V216–V236, L253–L273, F283–L303, L337–I357, V375–G395, F397–I417, and W432–T452.

This sequence belongs to the amino acid/polyamine transporter 2 family. In third instar larvae, expressed at highest levels in the brain and digestive system with particularly high levels in surface glia of the brain (at protein level). In third instar larvae, expressed in all cells of the body wall (at protein level). Within the body wall of third instar larvae, most highly expressed in epithelial cells and sensory neurons. Expressed at a similar level in all da neurons (at protein level). Widely expressed during embryonic and late larval stages. Levels are highly dynamic in embryogenesis with surges of expression in many structures, including muscle primordia, salivary glands, proventriculus, trachea and gonads. Expressed in all or most cells of larval imaginal disks. Expression is also particularly strong in the pouch and hinge regions of the wing disk and in the morphogenetic furrow of the eye disk.

The protein localises to the cell membrane. It is found in the lysosome membrane. The protein resides in the late endosome membrane. Its subcellular location is the cell projection. It localises to the axon. The protein localises to the dendrite. It is found in the perikaryon. The protein resides in the cytoplasm. Its function is as follows. Amino acid transporter which has pH-dependent electrogenic transport activity for alanine and glycine but not for proline. Plays a role in positive regulation of growth by directly or indirectly modulating the effects of the TOR signaling pathway. Required in a cell-autonomous manner for dendrite growth in neurons with large dendrite arbors. The sequence is that of Proton-coupled amino acid transporter-like protein pathetic from Drosophila melanogaster (Fruit fly).